The sequence spans 282 residues: 2-dehydro-3-deoxyphosphooctonate aldolase (282 aa).

It belongs to the KdsA family.

Its subcellular location is the cytoplasm. It carries out the reaction D-arabinose 5-phosphate + phosphoenolpyruvate + H2O = 3-deoxy-alpha-D-manno-2-octulosonate-8-phosphate + phosphate. It functions in the pathway carbohydrate biosynthesis; 3-deoxy-D-manno-octulosonate biosynthesis; 3-deoxy-D-manno-octulosonate from D-ribulose 5-phosphate: step 2/3. The protein operates within bacterial outer membrane biogenesis; lipopolysaccharide biosynthesis. This Shewanella sediminis (strain HAW-EB3) protein is 2-dehydro-3-deoxyphosphooctonate aldolase.